The sequence spans 604 residues: Vacuolar protein sorting-associated protein 64 (604 aa).

Residues 1–89 are disordered; it reads MVELEKRRRP…SVHQVSQQQQ (89 aa). The Cytoplasmic portion of the chain corresponds to 1 to 578; the sequence is MVELEKRRRP…LGVVEGKRTR (578 aa). Polar residues predominate over residues 22-34; the sequence is DQSNSQGMTKTPE. Composition is skewed to low complexity over residues 44-57 and 77-89; these read RARSNSRSSGSRSN and SPPSVHQVSQQQQ. The 73-residue stretch at 185 to 257 folds into the FHA domain; that stretch reads LKLGRPVTNS…NGTFVNGVKI (73 aa). The stretch at 404–563 forms a coiled coil; that stretch reads NLINMIKTLT…EEKKDTEDTL (160 aa). Residues 539 to 561 are disordered; that stretch reads INNDNNAKVKQNDSREEKKDTED. The span at 548–560 shows a compositional bias: basic and acidic residues; the sequence is KQNDSREEKKDTE. The chain crosses the membrane as a helical; Anchor for type IV membrane protein span at residues 579–598; the sequence is VSKGMLFGVVAISFGLVATA. Over 599 to 604 the chain is Lumenal; sequence VKQLPQ.

In terms of assembly, component of a complex at least composed of FAR3, FAR7, FAR8, FAR10, FAR11 and VPS64.

The protein localises to the endoplasmic reticulum membrane. Participates in the control of the reentry into the cell cycle following pheromone treatment. Involved in vacuolar protein sorting. This Saccharomyces cerevisiae (strain ATCC 204508 / S288c) (Baker's yeast) protein is Vacuolar protein sorting-associated protein 64 (VPS64).